Here is a 63-residue protein sequence, read N- to C-terminus: Protein DsrB (63 aa).

Belongs to the DsrB family.

In Yersinia enterocolitica serotype O:8 / biotype 1B (strain NCTC 13174 / 8081), this protein is Protein DsrB.